A 224-amino-acid polypeptide reads, in one-letter code: UPF0173 metal-dependent hydrolase TON_1314 (224 aa).

Belongs to the UPF0173 family.

The polypeptide is UPF0173 metal-dependent hydrolase TON_1314 (Thermococcus onnurineus (strain NA1)).